Consider the following 211-residue polypeptide: Protein-L-isoaspartate O-methyltransferase (211 aa).

Serine 60 is an active-site residue.

The protein belongs to the methyltransferase superfamily. L-isoaspartyl/D-aspartyl protein methyltransferase family.

It localises to the cytoplasm. It carries out the reaction [protein]-L-isoaspartate + S-adenosyl-L-methionine = [protein]-L-isoaspartate alpha-methyl ester + S-adenosyl-L-homocysteine. Functionally, catalyzes the methyl esterification of L-isoaspartyl residues in peptides and proteins that result from spontaneous decomposition of normal L-aspartyl and L-asparaginyl residues. It plays a role in the repair and/or degradation of damaged proteins. The polypeptide is Protein-L-isoaspartate O-methyltransferase (Pseudomonas fluorescens (strain Pf0-1)).